A 215-amino-acid polypeptide reads, in one-letter code: Sodium channel regulatory subunit beta-2 (215 aa).

The first 29 residues, 1–29 (MHRDAWLPRPAFSLTGLSLFFSLVPSGRS), serve as a signal peptide directing secretion. The Extracellular segment spans residues 30-157 (MEVTVPTTLS…LEVPPERDST (128 aa)). Residues 32–154 (VTVPTTLSVL…QVLLEVPPER (123 aa)) enclose the Ig-like C2-type domain. N-linked (GlcNAc...) asparagine glycans are attached at residues asparagine 42, asparagine 66, and asparagine 74. 2 disulfide bridges follow: cysteine 50-cysteine 127 and cysteine 72-cysteine 75. Residues 158-179 (VAVIVGASVGGFLAVVILVLMV) traverse the membrane as a helical segment. Over 180–215 (VKCVRRKKEQKLSTDDLKTEEEGKTDGEGNAEDGAK) the chain is Cytoplasmic. The disordered stretch occupies residues 187–215 (KEQKLSTDDLKTEEEGKTDGEGNAEDGAK). The span at 189-215 (QKLSTDDLKTEEEGKTDGEGNAEDGAK) shows a compositional bias: basic and acidic residues. Serine 192 bears the Phosphoserine mark. Threonine 204 is modified (phosphothreonine).

It belongs to the sodium channel auxiliary subunit SCN2B (TC 8.A.17) family. In terms of assembly, a voltage-gated sodium (Nav) channel consists of an ion-conducting pore-forming alpha subunit functional on its own that is regulated by one or more beta subunits. The beta subunit SCN2B is disulfide-linked to the pore-forming alpha subunit. Interacts with SCN1A; regulatory subunit of SCN1A/Nav1.1. Interacts with SCN2A; regulatory subunit of SCN2A/Nav1.2. Interacts with SCN3A; regulatory subunit of SCN3A/Nav1.3. Interacts with SCN5A; regulatory subunit of SCN5A/Nav1.5. Interacts with SCN8A; regulatory subunit of SCN8A/Nav1.6. Interacts with SCN9A; regulatory subunit of SCN9A/Nav1.7. Interacts with SCN10A; regulatory subunit of SCN10A/Nav1.8. Interacts with TNR; may play a crucial role in clustering and regulation of activity of SCN2B-containing Nav channels at nodes of Ranvier.

It is found in the cell membrane. It localises to the cell projection. The protein resides in the axon. In terms of biological role, regulatory subunit of multiple voltage-gated sodium (Nav) channels directly mediating the depolarization of excitable membranes. Navs, also called VGSCs (voltage-gated sodium channels) or VDSCs (voltage-dependent sodium channels), operate by switching between closed and open conformations depending on the voltage difference across the membrane. In the open conformation they allow Na(+) ions to selectively pass through the pore, along their electrochemical gradient. The influx of Na+ ions provokes membrane depolarization, initiating the propagation of electrical signals throughout cells and tissues. The accessory beta subunits participate in localization and functional modulation of the Nav channels. Modulates the activity of SCN1A/Nav1.1, SCN2A/Nav1.2, SCN2A/Nav1.3, SCN5A/Nav1.5, SCN8A/Nav1.6, SCN9A/Nav1.7 and SCN10A/Nav1.8. This chain is Sodium channel regulatory subunit beta-2, found in Rattus norvegicus (Rat).